Here is a 362-residue protein sequence, read N- to C-terminus: 4-hydroxythreonine-4-phosphate dehydrogenase (362 aa).

Residue threonine 149 coordinates substrate. A divalent metal cation-binding residues include histidine 184, histidine 229, and histidine 295. Positions 303, 312, and 321 each coordinate substrate.

It belongs to the PdxA family. As to quaternary structure, homodimer. Requires a divalent metal cation as cofactor.

It localises to the cytoplasm. The enzyme catalyses 4-(phosphooxy)-L-threonine + NAD(+) = 3-amino-2-oxopropyl phosphate + CO2 + NADH. Its pathway is cofactor biosynthesis; pyridoxine 5'-phosphate biosynthesis; pyridoxine 5'-phosphate from D-erythrose 4-phosphate: step 4/5. Catalyzes the NAD(P)-dependent oxidation of 4-(phosphooxy)-L-threonine (HTP) into 2-amino-3-oxo-4-(phosphooxy)butyric acid which spontaneously decarboxylates to form 3-amino-2-oxopropyl phosphate (AHAP). The polypeptide is 4-hydroxythreonine-4-phosphate dehydrogenase (Nostoc sp. (strain PCC 7120 / SAG 25.82 / UTEX 2576)).